Reading from the N-terminus, the 874-residue chain is Valine--tRNA ligase (874 aa).

A 'HIGH' region motif is present at residues Pro42–His52. The 'KMSKS' region signature appears at Lys522 to Ser526. Lys525 provides a ligand contact to ATP. The stretch at Asp806–Ser874 forms a coiled coil.

It belongs to the class-I aminoacyl-tRNA synthetase family. ValS type 1 subfamily. Monomer.

The protein localises to the cytoplasm. The enzyme catalyses tRNA(Val) + L-valine + ATP = L-valyl-tRNA(Val) + AMP + diphosphate. In terms of biological role, catalyzes the attachment of valine to tRNA(Val). As ValRS can inadvertently accommodate and process structurally similar amino acids such as threonine, to avoid such errors, it has a 'posttransfer' editing activity that hydrolyzes mischarged Thr-tRNA(Val) in a tRNA-dependent manner. This chain is Valine--tRNA ligase, found in Petrotoga mobilis (strain DSM 10674 / SJ95).